Here is a 139-residue protein sequence, read N- to C-terminus: Peptide methionine sulfoxide reductase MsrB (139 aa).

Residues 17-139 (EEQWRRELSP…NSAALKLEPK (123 aa)) enclose the MsrB domain. Positions 56, 59, 105, and 108 each coordinate Zn(2+). Residue C128 is the Nucleophile of the active site.

The protein belongs to the MsrB Met sulfoxide reductase family. Requires Zn(2+) as cofactor.

The enzyme catalyses L-methionyl-[protein] + [thioredoxin]-disulfide + H2O = L-methionyl-(R)-S-oxide-[protein] + [thioredoxin]-dithiol. The polypeptide is Peptide methionine sulfoxide reductase MsrB (Bradyrhizobium diazoefficiens (strain JCM 10833 / BCRC 13528 / IAM 13628 / NBRC 14792 / USDA 110)).